Reading from the N-terminus, the 479-residue chain is ATP-dependent RNA helicase DDX19B (479 aa).

Ala2 carries the N-acetylalanine modification. The interval 2–300 (ATDSWALAVD…DPNVIKLKRE (299 aa)) is N-terminal lobe. The tract at residues 34 to 54 (TNGAVVKTNANAEKTDEEEKE) is disordered. Residues 55 to 68 (DRAAQSLLNKLIRS) form an N-terminal helix region. The Q motif motif lies at 92–120 (KSFEELRLKPQLLQGVYAMGFNRPSKIQE). ATP-binding positions include Gln119 and 138–145 (SQSGTGKT). Residues 125–295 (LMLAEPPQNL…QKVVPDPNVI (171 aa)) form the Helicase ATP-binding domain. The DEAD box signature appears at 242–245 (DEAD). The C-terminal lobe stretch occupies residues 301-479 (EETLDTIKQY…DLDEIEKIAN (179 aa)). In terms of domain architecture, Helicase C-terminal spans 306-474 (TIKQYYVLCS…RLDTDDLDEI (169 aa)). 2 residues coordinate ATP: Arg429 and Arg432.

It belongs to the DEAD box helicase family. DDX19/DBP5 subfamily. In terms of assembly, associates with the nuclear pore complex via interaction with NUP214. Interacts with NUP214 or RNA in a mutually exclusive manner.

The protein resides in the cytoplasm. It is found in the nucleus. Its subcellular location is the nucleoplasm. The enzyme catalyses ATP + H2O = ADP + phosphate + H(+). Functionally, ATP-dependent RNA helicase involved in mRNA export from the nucleus. Rather than unwinding RNA duplexes, DDX19B functions as a remodeler of ribonucleoprotein particles, whereby proteins bound to nuclear mRNA are dissociated and replaced by cytoplasmic mRNA binding proteins. The chain is ATP-dependent RNA helicase DDX19B (DDX19B) from Homo sapiens (Human).